Consider the following 427-residue polypeptide: FAD-dependent monooxygenase OpS4 (427 aa).

Residues 1 to 22 form the signal peptide; it reads MGSIREPLHLVVIGGGLAGLSA. E37 contributes to the FAD binding site. N54 carries an N-linked (GlcNAc...) asparagine glycan. FAD-binding residues include R112, D306, and A319.

The protein belongs to the paxM FAD-dependent monooxygenase family. Requires FAD as cofactor.

It functions in the pathway secondary metabolite biosynthesis. FAD-dependent monooxygenase; part of the gene cluster that mediates the biosynthesis of the bibenzoquinone oosporein, a metabolite required for fungal virulence that acts by evading host immunity to facilitate fungal multiplication in insects. The non-reducing polyketide synthase OpS1 produces orsellinic acid by condensing acetyl-CoA with 3 malonyl-CoA units. Orsellinic acid is then hydroxylated to benzenetriol by the hydroxylase OpS4. The intermediate is oxidized either nonenzymatically to 5,5'-dideoxy-oosporein or enzymatically to benzenetetrol by the oxidoreductase OpS7. The latter is further dimerized to oosporein by the catalase OpS5. OpS6 probably functions en route for protecting cells against oxidative stress by scavenging any leaked free radical form of benzenetetrol by activating the thiol group of glutathione. The protein is FAD-dependent monooxygenase OpS4 of Beauveria bassiana (strain ARSEF 2860) (White muscardine disease fungus).